The following is a 393-amino-acid chain: Digeranylgeranylglycerophospholipid reductase 2 (393 aa).

D33, C44, A45, G47, R100, A124, D280, G292, and I293 together coordinate FAD.

The protein belongs to the geranylgeranyl reductase family. DGGGPL reductase subfamily. FAD serves as cofactor.

The catalysed reaction is a 2,3-bis-O-phytanyl-sn-glycerol 1-phospholipid + 8 A = a 2,3-bis-O-(geranylgeranyl)-sn-glycerol 1-phospholipid + 8 AH2. The enzyme catalyses 2,3-bis-O-(phytanyl)-sn-glycerol 1-phosphate + 8 A = 2,3-bis-O-(geranylgeranyl)-sn-glycerol 1-phosphate + 8 AH2. It carries out the reaction CDP-2,3-bis-O-(geranylgeranyl)-sn-glycerol + 8 AH2 = CDP-2,3-bis-O-(phytanyl)-sn-glycerol + 8 A. It catalyses the reaction archaetidylserine + 8 AH2 = 2,3-bis-O-phytanyl-sn-glycero-3-phospho-L-serine + 8 A. It functions in the pathway membrane lipid metabolism; glycerophospholipid metabolism. Functionally, is involved in the reduction of 2,3-digeranylgeranylglycerophospholipids (unsaturated archaeols) into 2,3-diphytanylglycerophospholipids (saturated archaeols) in the biosynthesis of archaeal membrane lipids. Catalyzes the formation of archaetidic acid (2,3-di-O-phytanyl-sn-glyceryl phosphate) from 2,3-di-O-geranylgeranylglyceryl phosphate (DGGGP) via the hydrogenation of each double bond of the isoprenoid chains. Is also probably able to reduce double bonds of geranyl groups in CDP-2,3-bis-O-(geranylgeranyl)-sn-glycerol and archaetidylserine, thus acting at various stages in the biosynthesis of archaeal membrane lipids. The protein is Digeranylgeranylglycerophospholipid reductase 2 of Methanosphaera stadtmanae (strain ATCC 43021 / DSM 3091 / JCM 11832 / MCB-3).